A 218-amino-acid chain; its full sequence is Adenylate kinase (218 aa).

An ATP-binding site is contributed by 10–15; sequence GAGKGT. The interval 30 to 59 is NMP; that stretch reads STGDMLRAAVKAGTPLGVEAKKIMDAGALV. AMP contacts are provided by residues Thr-31, Arg-36, 57–59, 85–88, and Gln-92; these read ALV and GFPR. The tract at residues 122 to 159 is LID; the sequence is GRRSHTASGRTYHVKYNPPKVEGKDDVTGEPLIQREDD. ATP-binding positions include Arg-123 and 132–133; that span reads TY. 2 residues coordinate AMP: Arg-156 and Arg-167. An ATP-binding site is contributed by Gly-203.

Belongs to the adenylate kinase family. Monomer.

The protein localises to the cytoplasm. The catalysed reaction is AMP + ATP = 2 ADP. Its pathway is purine metabolism; AMP biosynthesis via salvage pathway; AMP from ADP: step 1/1. Catalyzes the reversible transfer of the terminal phosphate group between ATP and AMP. Plays an important role in cellular energy homeostasis and in adenine nucleotide metabolism. The protein is Adenylate kinase of Polaromonas sp. (strain JS666 / ATCC BAA-500).